The primary structure comprises 348 residues: Mannonate dehydratase (348 aa).

Belongs to the mannonate dehydratase family. It depends on Fe(2+) as a cofactor. The cofactor is Mn(2+).

It catalyses the reaction D-mannonate = 2-dehydro-3-deoxy-D-gluconate + H2O. It participates in carbohydrate metabolism; pentose and glucuronate interconversion. Its function is as follows. Catalyzes the dehydration of D-mannonate. In Streptococcus agalactiae serotype Ia (strain ATCC 27591 / A909 / CDC SS700), this protein is Mannonate dehydratase.